The sequence spans 224 residues: RNA-binding protein 24-B (224 aa).

The region spanning 11–88 (TKIFVGGLPY…RKANVNLAYL (78 aa)) is the RRM domain.

Its subcellular location is the nucleus. The protein localises to the cytoplasm. Functionally, multifunctional RNA-binding protein involved in the regulation of pre-mRNA splicing, mRNA stability and mRNA translation important for cell fate decision and differentiation. Plays a major role in pre-mRNA alternative splicing regulation. Mediates preferentially muscle-specific exon inclusion in numerous mRNAs important for striated cardiac and skeletal muscle cell differentiation. Binds to intronic splicing enhancer (ISE) composed of stretches of GU-rich motifs localized in flanking intron of exon that will be included by alternative splicing. Involved in embryonic stem cell (ESC) transition to cardiac cell differentiation by promoting pre-mRNA alternative splicing events of several pluripotency and/or differentiation genes. Plays a role in the regulation of mRNA stability and mRNA translation to which it is bound. Involved in myogenic differentiation by regulating myog levels. Binds to a huge amount of mRNAs. Required for embryonic heart development, sarcomer and M-band formation in striated muscles. This is RNA-binding protein 24-B (rbm24-b) from Xenopus laevis (African clawed frog).